Here is a 246-residue protein sequence, read N- to C-terminus: Transmembrane and ubiquitin-like domain-containing protein 1 (246 aa).

Residues 2-30 (ALIEGVGDEVTILFSALACLLVLALAWVS) are required to release iHOPS from membranes. The chain crosses the membrane as a helical span at residues 11 to 31 (VTILFSALACLLVLALAWVST). The segment at 35-102 (EGADPLPQPS…PPPPDSPQEP (68 aa)) is disordered. Residues 40–50 (LPQPSGTPTPT) are compositionally biased toward pro residues. Phosphothreonine occurs at positions 71 and 92. Phosphoserine occurs at positions 98 and 127. Positions 103–176 (LVLRLKFLND…LHCHVSTRVG (74 aa)) constitute a Ubiquitin-like domain. 2 helical membrane passes run 195-215 (VGSL…YCQI) and 221-241 (FPLT…LLAF).

Interacts with EEF1A1, GRIA2, GRIP1, CAMLG, TUBG1. Interacts with NPM1 and CDKN2A; TMUB1 can enhance interaction between NPM1 and CDKN2A and is proposed to bridge the proteins; proposed to be mediated by iHOPS. Interacts with ERLIN2 and AMFR; TMUB1 promotes the interaction of ERLIN2 with AMFR. In terms of processing, processed by regulated intramembrane proteolysis (RIP) in the N-terminus to release iHOPS from membranes.

The protein resides in the membrane. It is found in the postsynaptic cell membrane. The protein localises to the recycling endosome. It localises to the cytoplasm. Its subcellular location is the nucleus. The protein resides in the nucleolus. It is found in the cytoskeleton. The protein localises to the microtubule organizing center. It localises to the centrosome. Its function is as follows. Involved in sterol-regulated ubiquitination and degradation of HMG-CoA reductase HMGCR. Involved in positive regulation of AMPA-selective glutamate receptor GRIA2 recycling to the cell surface. Acts as negative regulator of hepatocyte growth during regeneration. May contribute to the regulation of translation during cell-cycle progression. May contribute to the regulation of cell proliferation. May be involved in centrosome assembly. Modulates stabilization and nucleolar localization of tumor suppressor CDKN2A and enhances association between CDKN2A and NPM1. The protein is Transmembrane and ubiquitin-like domain-containing protein 1 (TMUB1) of Bos taurus (Bovine).